We begin with the raw amino-acid sequence, 299 residues long: Ribosomal RNA small subunit methyltransferase H (299 aa).

Residues 35-37, D54, Y80, D101, and Q108 contribute to the S-adenosyl-L-methionine site; that span reads GGH.

This sequence belongs to the methyltransferase superfamily. RsmH family.

Its subcellular location is the cytoplasm. The enzyme catalyses cytidine(1402) in 16S rRNA + S-adenosyl-L-methionine = N(4)-methylcytidine(1402) in 16S rRNA + S-adenosyl-L-homocysteine + H(+). Its function is as follows. Specifically methylates the N4 position of cytidine in position 1402 (C1402) of 16S rRNA. The sequence is that of Ribosomal RNA small subunit methyltransferase H from Coprothermobacter proteolyticus (strain ATCC 35245 / DSM 5265 / OCM 4 / BT).